A 265-amino-acid polypeptide reads, in one-letter code: uncharacterized protein (265 aa).

Positions 1–23 are cleaved as a signal peptide; it reads MNYFRILYCSVLLFFSFFSCTSA. One can recognise a NodB homology domain in the interval 67 to 248; that stretch reads KEIYLTFDNG…TLKQQGYTFK (182 aa).

This sequence belongs to the polysaccharide deacetylase family.

This is an uncharacterized protein from Geobacillus stearothermophilus (Bacillus stearothermophilus).